The following is a 417-amino-acid chain: MAEYKNYTLNFGPVHPAAHGVLRLILELDGENVVRADPHVGLLHRGTEKLAEFKPYNQSIGYMDRLDYVSMMCNEHAYVMAIEKLLQLEVPERAKYIRVMFAEMTRILNHLLWVAACGIDLGAMTVFLYAFRVREDLFDCYEAVSGARMHAAYFRPGGVARDLPTQMPQYQKTRFTSKRKAKKLNEPRQGSMLDFLDHFVVDFEKSLDEIDTLLTDNRLWKQRTVDIGTVTAERAKELGFTGPMLRGSGVAWDLRKTQPYEVYHKLEFDIPIGANGDCYDRYLVRMAEMRESNKLIKQCVDWLRANPGPVLSDNNKVAPPKRNAMKNNMEELIHHFKLFSEGYCTTEGEVYVGTEHPKGEFGVYIKSDGANKPYRLKMRAPGFAHISAMDELLSGHMLADTPAIISTIDVVFGDVDR.

The protein belongs to the complex I 49 kDa subunit family. NDH-1 is composed of 14 different subunits. Subunits NuoB, C, D, E, F, and G constitute the peripheral sector of the complex.

The protein resides in the cell inner membrane. It catalyses the reaction a quinone + NADH + 5 H(+)(in) = a quinol + NAD(+) + 4 H(+)(out). Functionally, NDH-1 shuttles electrons from NADH, via FMN and iron-sulfur (Fe-S) centers, to quinones in the respiratory chain. The immediate electron acceptor for the enzyme in this species is believed to be ubiquinone. Couples the redox reaction to proton translocation (for every two electrons transferred, four hydrogen ions are translocated across the cytoplasmic membrane), and thus conserves the redox energy in a proton gradient. The protein is NADH-quinone oxidoreductase subunit D of Francisella tularensis subsp. tularensis (strain FSC 198).